The following is a 1621-amino-acid chain: Lysophospholipase NTE1 (1621 aa).

The Cytoplasmic segment spans residues 1–12 (MSSIPTPPDANG). The helical transmembrane segment at 13–33 (NPLIALAVAVIYAILYVLQGV) threads the bilayer. Residues 34 to 59 (KYGVSLLTIGIPSCIVRMLQYSLTIS) are Lumenal-facing. The chain crosses the membrane as a helical span at residues 60 to 80 (LGFPHLLALFAGALLALFFLI). Residues 81 to 1621 (RYRYLTRYAQ…RGNRLRRMSI (1541 aa)) are Cytoplasmic-facing. Disordered regions lie at residues 188–209 (PDAS…TRPS), 250–379 (EGEE…SVPR), 545–566 (QTAT…LDET), 648–667 (WNLN…QRDD), 711–735 (VSAL…GSTR), 772–791 (DDEA…GASG), and 839–870 (FRST…ERPF). Composition is skewed to low complexity over residues 195–209 (TPTP…TRPS) and 348–361 (RRSQ…RLNS). A nucleoside 3',5'-cyclic phosphate-binding positions include 788-907 (GASG…GYLS) and 951-1070 (RLLS…IAGR). Polar residues predominate over residues 839–867 (FRSTSSNQENPNSTPGSKHRQSSFGSSNE). The PNPLA domain maps to 1316-1480 (LVLGGGGARG…MDNTPIQPLR (165 aa)). The GXGXXG motif lies at 1320 to 1325 (GGGARG). The GXSXG motif lies at 1347 to 1351 (GCSIG). The Nucleophile role is filled by S1349. Catalysis depends on D1467, which acts as the Proton acceptor. Positions 1467–1469 (DGG) match the DGA/G motif.

This sequence belongs to the NTE family.

It localises to the endoplasmic reticulum membrane. It carries out the reaction a 1-acyl-sn-glycero-3-phosphocholine + H2O = sn-glycerol 3-phosphocholine + a fatty acid + H(+). With respect to regulation, inhibited by organophosphorus esters. Functionally, intracellular phospholipase B that catalyzes the double deacylation of phosphatidylcholine (PC) to glycerophosphocholine (GroPCho). Plays an important role in membrane lipid homeostasis. Responsible for the rapid PC turnover in response to inositol, elevated temperatures, or when choline is present in the growth medium. The protein is Lysophospholipase NTE1 (NTE1) of Cryptococcus neoformans var. neoformans serotype D (strain B-3501A) (Filobasidiella neoformans).